The chain runs to 217 residues: ATP synthase subunit a (217 aa).

The next 6 membrane-spanning stretches (helical) occupy residues 5 to 25 (EHVI…LAAG), 63 to 83 (LIAS…LPFV), 89 to 109 (NINT…FEGF), 120 to 140 (FMGP…MSHL), 157 to 177 (GAIL…TLAV), and 191 to 213 (LAIV…GAVV).

This sequence belongs to the ATPase A chain family. In terms of assembly, F-type ATPases have 2 components, CF(1) - the catalytic core - and CF(0) - the membrane proton channel. CF(1) has five subunits: alpha(3), beta(3), gamma(1), delta(1), epsilon(1). CF(0) has three main subunits: a(1), b(2) and c(9-12). The alpha and beta chains form an alternating ring which encloses part of the gamma chain. CF(1) is attached to CF(0) by a central stalk formed by the gamma and epsilon chains, while a peripheral stalk is formed by the delta and b chains.

It localises to the cell inner membrane. Key component of the proton channel; it plays a direct role in the translocation of protons across the membrane. The protein is ATP synthase subunit a of Hydrogenobaculum sp. (strain Y04AAS1).